Consider the following 72-residue polypeptide: Translation initiation factor IF-1 (72 aa).

The region spanning 1–72 (MAKEESIEVE…SKGRITYRYK (72 aa)) is the S1-like domain.

The protein belongs to the IF-1 family. As to quaternary structure, component of the 30S ribosomal translation pre-initiation complex which assembles on the 30S ribosome in the order IF-2 and IF-3, IF-1 and N-formylmethionyl-tRNA(fMet); mRNA recruitment can occur at any time during PIC assembly.

Its subcellular location is the cytoplasm. In terms of biological role, one of the essential components for the initiation of protein synthesis. Stabilizes the binding of IF-2 and IF-3 on the 30S subunit to which N-formylmethionyl-tRNA(fMet) subsequently binds. Helps modulate mRNA selection, yielding the 30S pre-initiation complex (PIC). Upon addition of the 50S ribosomal subunit IF-1, IF-2 and IF-3 are released leaving the mature 70S translation initiation complex. The polypeptide is Translation initiation factor IF-1 (Chlorobaculum tepidum (strain ATCC 49652 / DSM 12025 / NBRC 103806 / TLS) (Chlorobium tepidum)).